The sequence spans 320 residues: Lipoyl synthase (320 aa).

The disordered stretch occupies residues 1–26; the sequence is MVTVVDRVTSRRLRHPEKMHRPDTSI. [4Fe-4S] cluster is bound by residues C59, C64, C70, C85, C89, C92, and S298. One can recognise a Radical SAM core domain in the interval 71–287; sequence WSQRHASFMI…AKIGKVKGFL (217 aa).

Belongs to the radical SAM superfamily. Lipoyl synthase family. It depends on [4Fe-4S] cluster as a cofactor.

Its subcellular location is the cytoplasm. It catalyses the reaction [[Fe-S] cluster scaffold protein carrying a second [4Fe-4S](2+) cluster] + N(6)-octanoyl-L-lysyl-[protein] + 2 oxidized [2Fe-2S]-[ferredoxin] + 2 S-adenosyl-L-methionine + 4 H(+) = [[Fe-S] cluster scaffold protein] + N(6)-[(R)-dihydrolipoyl]-L-lysyl-[protein] + 4 Fe(3+) + 2 hydrogen sulfide + 2 5'-deoxyadenosine + 2 L-methionine + 2 reduced [2Fe-2S]-[ferredoxin]. It participates in protein modification; protein lipoylation via endogenous pathway; protein N(6)-(lipoyl)lysine from octanoyl-[acyl-carrier-protein]: step 2/2. In terms of biological role, catalyzes the radical-mediated insertion of two sulfur atoms into the C-6 and C-8 positions of the octanoyl moiety bound to the lipoyl domains of lipoate-dependent enzymes, thereby converting the octanoylated domains into lipoylated derivatives. In Bartonella quintana (strain Toulouse) (Rochalimaea quintana), this protein is Lipoyl synthase.